Consider the following 227-residue polypeptide: Leucyl/phenylalanyl-tRNA--protein transferase (227 aa).

It belongs to the L/F-transferase family.

Its subcellular location is the cytoplasm. The catalysed reaction is N-terminal L-lysyl-[protein] + L-leucyl-tRNA(Leu) = N-terminal L-leucyl-L-lysyl-[protein] + tRNA(Leu) + H(+). It carries out the reaction N-terminal L-arginyl-[protein] + L-leucyl-tRNA(Leu) = N-terminal L-leucyl-L-arginyl-[protein] + tRNA(Leu) + H(+). The enzyme catalyses L-phenylalanyl-tRNA(Phe) + an N-terminal L-alpha-aminoacyl-[protein] = an N-terminal L-phenylalanyl-L-alpha-aminoacyl-[protein] + tRNA(Phe). Functions in the N-end rule pathway of protein degradation where it conjugates Leu, Phe and, less efficiently, Met from aminoacyl-tRNAs to the N-termini of proteins containing an N-terminal arginine or lysine. This Afipia carboxidovorans (strain ATCC 49405 / DSM 1227 / KCTC 32145 / OM5) (Oligotropha carboxidovorans) protein is Leucyl/phenylalanyl-tRNA--protein transferase.